The following is a 358-amino-acid chain: DnaJ homolog subfamily C member 18 (358 aa).

The 65-residue stretch at 82 to 146 (NYYEILGVSR…DKRLRYDEYG (65 aa)) folds into the J domain. The chain crosses the membrane as a helical span at residues 228–248 (AFIQLLPVLVIVIISVITQLL).

The protein resides in the endoplasmic reticulum membrane. The sequence is that of DnaJ homolog subfamily C member 18 (DNAJC18) from Macaca fascicularis (Crab-eating macaque).